Consider the following 95-residue polypeptide: Large ribosomal subunit protein bL21 (95 aa).

The protein belongs to the bacterial ribosomal protein bL21 family. As to quaternary structure, part of the 50S ribosomal subunit. Contacts protein L20.

Its function is as follows. This protein binds to 23S rRNA in the presence of protein L20. The sequence is that of Large ribosomal subunit protein bL21 from Prosthecochloris vibrioformis (Chlorobium vibrioforme).